Here is a 730-residue protein sequence, read N- to C-terminus: Propionyl-CoA carboxylase alpha chain, mitochondrial (730 aa).

The N-terminal 52 residues, 1-52, are a transit peptide targeting the mitochondrion; that stretch reads MAGLWVGGSVLVAAGRRGSRSPRPLMRSVALWTLKHVPQYSRQRLLVSRSLC. One can recognise a Biotin carboxylation domain in the interval 62–509; that stretch reads TFDKILIANR…NTKFLSDVYP (448 aa). Position 65 is an N6-acetyllysine; alternate (Lys-65). Lys-65 is modified (N6-succinyllysine; alternate). Lys-119 is modified (N6-succinyllysine). Lys-150 is modified (N6-acetyllysine; alternate). Lys-150 is modified (N6-succinyllysine; alternate). Lys-154 bears the N6-acetyllysine mark. Lys-177 is a binding site for ATP. An ATP-grasp domain is found at 181–378; it reads KLLAKKAKVN…LVQEMIRVAK (198 aa). At Lys-188 the chain carries N6-succinyllysine. Residue Lys-200 is modified to N6-acetyllysine; alternate. Lys-200 carries the N6-succinyllysine; alternate modification. Residues 209 to 270, Glu-261, and Asn-296 contribute to the ATP site; that span reads AREI…PRHI. Residue Ser-252 is modified to Phosphoserine. Position 262 is an N6-succinyllysine (Lys-262). The Mg(2+) site is built by Glu-336, Glu-349, and Asn-351. Mn(2+) contacts are provided by Glu-336, Glu-349, and Asn-351. The active site involves Glu-349. Lys-407 bears the N6-succinyllysine mark. Phe-409 contacts biotin. N6-succinyllysine is present on residues Lys-502, Lys-513, and Lys-650. Residues 655 to 730 form the Biotinyl-binding domain; the sequence is KAAEDTSSIL…GEGDLLVELE (76 aa). Position 696 is an N6-biotinyllysine (Lys-696).

In terms of assembly, the holoenzyme is a dodecamer composed of 6 PCCA/alpha subunits and 6 PCCB/beta subunits. Interacts (via the biotin carboxylation domain) with SIRT4. Interacts with SIRT3 and SIRT5. Mg(2+) is required as a cofactor. The cofactor is Mn(2+). Biotin serves as cofactor. Post-translationally, acetylated. The biotin cofactor is covalently attached to the C-terminal biotinyl-binding domain and is required for the catalytic activity. Biotinylation is catalyzed by HLCS.

It localises to the mitochondrion matrix. The enzyme catalyses propanoyl-CoA + hydrogencarbonate + ATP = (S)-methylmalonyl-CoA + ADP + phosphate + H(+). It carries out the reaction butanoyl-CoA + hydrogencarbonate + ATP = (2S)-ethylmalonyl-CoA + ADP + phosphate + H(+). It participates in metabolic intermediate metabolism; propanoyl-CoA degradation; succinyl-CoA from propanoyl-CoA: step 1/3. In terms of biological role, this is one of the 2 subunits of the biotin-dependent propionyl-CoA carboxylase (PCC), a mitochondrial enzyme involved in the catabolism of odd chain fatty acids, branched-chain amino acids isoleucine, threonine, methionine, and valine and other metabolites. Propionyl-CoA carboxylase catalyzes the carboxylation of propionyl-CoA/propanoyl-CoA to D-methylmalonyl-CoA/(S)-methylmalonyl-CoA. Within the holoenzyme, the alpha subunit catalyzes the ATP-dependent carboxylation of the biotin carried by the biotin carboxyl carrier (BCC) domain, while the beta subunit then tranfers the carboxyl group from carboxylated biotin to propionyl-CoA. Propionyl-CoA carboxylase also significantly acts on butyryl-CoA/butanoyl-CoA, which is converted to ethylmalonyl-CoA/(2S)-ethylmalonyl-CoA at a much lower rate. Other alternative minor substrates include (2E)-butenoyl-CoA/crotonoyl-CoA. In Sus scrofa (Pig), this protein is Propionyl-CoA carboxylase alpha chain, mitochondrial.